A 445-amino-acid polypeptide reads, in one-letter code: Probable fructoselysine/psicoselysine transporter FrlA (445 aa).

11 helical membrane-spanning segments follow: residues 10-32 (LGFWAVLAIAVGTTVGSGIFVSV), 39-61 (AGTPWLTVLAFVIGGLIVIPQMC), 97-119 (FWANDAPSLSIMALAIVSNLGFL), 126-143 (LGKFIAAGLIIAFMLLHL), 153-175 (QTLITIAKIIPFTIVIGLGIFWF), 188-210 (IGATGSFMALLAGISATSWSYTG), 230-252 (RALIGSCLLVLVLYTLLALVISG), 272-294 (WIPALGSTAGIFVAITAMIVILG), 341-363 (GIFFIFVSDLTSLLGYFTLVMCF), 384-406 (LWRTPAFGLMTPLAIASSLILVA), and 411-433 (WAPIPGLICAVIVIATGLPAYAF).

It belongs to the amino acid-polyamine-organocation (APC) superfamily.

The protein resides in the cell inner membrane. The enzyme catalyses N(6)-(D-fructosyl)-L-lysine(in) = N(6)-(D-fructosyl)-L-lysine(out). The catalysed reaction is N(6)-(D-psicosyl)-L-lysine(in) = N(6)-(D-psicosyl)-L-lysine(out). It functions in the pathway carbohydrate metabolism; fructoselysine degradation. Functionally, is likely involved in the transport of fructoselysine and psicoselysine to the cytoplasm, where they are degraded. The sequence is that of Probable fructoselysine/psicoselysine transporter FrlA (frlA) from Escherichia coli O157:H7.